We begin with the raw amino-acid sequence, 251 residues long: Triosephosphate isomerase (251 aa).

Substrate is bound at residue 9 to 11; it reads NWK. Catalysis depends on His-96, which acts as the Electrophile. The active-site Proton acceptor is Glu-168. Residues Gly-174, Ser-214, and 235 to 236 contribute to the substrate site; that span reads GG.

It belongs to the triosephosphate isomerase family. Homodimer.

The protein localises to the cytoplasm. The catalysed reaction is D-glyceraldehyde 3-phosphate = dihydroxyacetone phosphate. The protein operates within carbohydrate biosynthesis; gluconeogenesis. Its pathway is carbohydrate degradation; glycolysis; D-glyceraldehyde 3-phosphate from glycerone phosphate: step 1/1. Involved in the gluconeogenesis. Catalyzes stereospecifically the conversion of dihydroxyacetone phosphate (DHAP) to D-glyceraldehyde-3-phosphate (G3P). This chain is Triosephosphate isomerase, found in Porphyromonas gingivalis (strain ATCC 33277 / DSM 20709 / CIP 103683 / JCM 12257 / NCTC 11834 / 2561).